The sequence spans 186 residues: Dirigent protein 4 (186 aa).

An N-terminal signal peptide occupies residues 1–20 (MGKNLGLVVSFYLCITFALG). N-linked (GlcNAc...) asparagine glycosylation is found at asparagine 67, asparagine 126, asparagine 169, and asparagine 180.

This sequence belongs to the plant dirigent protein family. Homodimer.

The protein localises to the secreted. It is found in the extracellular space. Its subcellular location is the apoplast. Functionally, dirigent proteins impart stereoselectivity on the phenoxy radical-coupling reaction, yielding optically active lignans from two molecules of coniferyl alcohol in the biosynthesis of lignans, flavonolignans, and alkaloids and thus plays a central role in plant secondary metabolism. The sequence is that of Dirigent protein 4 (DIR4) from Arabidopsis thaliana (Mouse-ear cress).